The following is a 391-amino-acid chain: Protein Wnt-2b (391 aa).

5 disulfides stabilise this stretch: Cys-107-Cys-118, Cys-158-Cys-166, Cys-168-Cys-188, Cys-237-Cys-251, and Cys-239-Cys-246. N-linked (GlcNAc...) asparagine glycosylation occurs at Asn-117. A lipid anchor (O-palmitoleoyl serine; by PORCN) is attached at Ser-243. A glycan (N-linked (GlcNAc...) asparagine) is linked at Asn-283. 6 disulfides stabilise this stretch: Cys-309–Cys-340, Cys-325–Cys-335, Cys-339–Cys-379, Cys-355–Cys-370, Cys-357–Cys-367, and Cys-362–Cys-363.

Belongs to the Wnt family. As to quaternary structure, forms a soluble 1:1 complex with AFM; this prevents oligomerization and is required for prolonged biological activity. The complex with AFM may represent the physiological form in body fluids. Interacts with FZD4 and FZD5. Palmitoleoylation is required for efficient binding to frizzled receptors. Depalmitoleoylation leads to Wnt signaling pathway inhibition. In terms of tissue distribution, isoform 1 is expressed in adult heart, brain, placenta, lung, prostate, testis, ovary, small intestine and colon. In the adult brain, it is mainly found in the caudate nucleus, subthalamic nucleus and thalamus. Also detected in fetal brain, lung and kidney. Isoform 2 is expressed in fetal brain, fetal lung, fetal kidney, caudate nucleus, testis and cancer cell lines.

Its subcellular location is the secreted. It is found in the extracellular space. The protein resides in the extracellular matrix. Its function is as follows. Ligand for members of the frizzled family of seven transmembrane receptors. Functions in the canonical Wnt/beta-catenin signaling pathway. Plays a redundant role in embryonic lung development. The sequence is that of Protein Wnt-2b (WNT2B) from Homo sapiens (Human).